Here is a 316-residue protein sequence, read N- to C-terminus: Pantothenate kinase (316 aa).

Residue 95–102 (GSVAVGKS) coordinates ATP.

It belongs to the prokaryotic pantothenate kinase family.

It localises to the cytoplasm. It catalyses the reaction (R)-pantothenate + ATP = (R)-4'-phosphopantothenate + ADP + H(+). The protein operates within cofactor biosynthesis; coenzyme A biosynthesis; CoA from (R)-pantothenate: step 1/5. The chain is Pantothenate kinase from Shigella boydii serotype 18 (strain CDC 3083-94 / BS512).